Here is a 124-residue protein sequence, read N- to C-terminus: Small ribosomal subunit protein uS13 (124 aa).

Residues 92–117 (RRGLPVRGQRTKSNARTRKGPRKTVA) are compositionally biased toward basic residues. A disordered region spans residues 92–124 (RRGLPVRGQRTKSNARTRKGPRKTVANKKIESK).

The protein belongs to the universal ribosomal protein uS13 family. As to quaternary structure, part of the 30S ribosomal subunit. Forms a loose heterodimer with protein S19. Forms two bridges to the 50S subunit in the 70S ribosome.

Its function is as follows. Located at the top of the head of the 30S subunit, it contacts several helices of the 16S rRNA. In the 70S ribosome it contacts the 23S rRNA (bridge B1a) and protein L5 of the 50S subunit (bridge B1b), connecting the 2 subunits; these bridges are implicated in subunit movement. Contacts the tRNAs in the A and P-sites. In Mycoplasmoides gallisepticum (strain R(low / passage 15 / clone 2)) (Mycoplasma gallisepticum), this protein is Small ribosomal subunit protein uS13.